The primary structure comprises 435 residues: Serine--tRNA ligase (435 aa).

241–243 contacts L-serine; that stretch reads TAE. 272-274 contacts ATP; sequence RAE. Glutamate 295 contacts L-serine. 359 to 362 serves as a coordination point for ATP; it reads EISS. Position 395 (serine 395) interacts with L-serine.

It belongs to the class-II aminoacyl-tRNA synthetase family. Type-1 seryl-tRNA synthetase subfamily. As to quaternary structure, homodimer. The tRNA molecule binds across the dimer.

The protein resides in the cytoplasm. The enzyme catalyses tRNA(Ser) + L-serine + ATP = L-seryl-tRNA(Ser) + AMP + diphosphate + H(+). It carries out the reaction tRNA(Sec) + L-serine + ATP = L-seryl-tRNA(Sec) + AMP + diphosphate + H(+). The protein operates within aminoacyl-tRNA biosynthesis; selenocysteinyl-tRNA(Sec) biosynthesis; L-seryl-tRNA(Sec) from L-serine and tRNA(Sec): step 1/1. Its function is as follows. Catalyzes the attachment of serine to tRNA(Ser). Is also able to aminoacylate tRNA(Sec) with serine, to form the misacylated tRNA L-seryl-tRNA(Sec), which will be further converted into selenocysteinyl-tRNA(Sec). This is Serine--tRNA ligase from Haemophilus ducreyi (strain 35000HP / ATCC 700724).